Consider the following 489-residue polypeptide: Glutamyl-tRNA(Gln) amidotransferase subunit A (489 aa).

Catalysis depends on charge relay system residues lysine 77 and serine 152. Serine 176 functions as the Acyl-ester intermediate in the catalytic mechanism.

Belongs to the amidase family. GatA subfamily. In terms of assembly, heterotrimer of A, B and C subunits.

The catalysed reaction is L-glutamyl-tRNA(Gln) + L-glutamine + ATP + H2O = L-glutaminyl-tRNA(Gln) + L-glutamate + ADP + phosphate + H(+). Functionally, allows the formation of correctly charged Gln-tRNA(Gln) through the transamidation of misacylated Glu-tRNA(Gln) in organisms which lack glutaminyl-tRNA synthetase. The reaction takes place in the presence of glutamine and ATP through an activated gamma-phospho-Glu-tRNA(Gln). The chain is Glutamyl-tRNA(Gln) amidotransferase subunit A from Protochlamydia amoebophila (strain UWE25).